Reading from the N-terminus, the 83-residue chain is Putative protein T-ENOL (83 aa).

The segment at methionine 1–arginine 33 is disordered.

The chain is Putative protein T-ENOL from Homo sapiens (Human).